A 144-amino-acid chain; its full sequence is Maximins 2/H8 type 2 (144 aa).

Residues M1–A18 form the signal peptide. A propeptide spanning residues R19–R43 is cleaved from the precursor. The residue at position 70 (N70) is an Asparagine amide. A propeptide spanning residues T74 to R123 is cleaved from the precursor. At I143 the chain carries Isoleucine amide.

The protein belongs to the bombinin family. In terms of tissue distribution, expressed by the skin glands.

Its subcellular location is the secreted. Maximin-2 shows antibacterial activity against both Gram-positive and Gram-negative bacteria. It also shows antimicrobial activity against the fungus C.albicans, but not against A.flavus nor P.uticale. It has little hemolytic activity. Functionally, maximin-H8 shows antimicrobial activity against bacteria and against the fungus C.albicans. Shows strong hemolytic activity. The sequence is that of Maximins 2/H8 type 2 from Bombina maxima (Giant fire-bellied toad).